The chain runs to 824 residues: U-box domain-containing protein 24 (824 aa).

The U-box domain occupies Gly13 to Lys92. 9 ARM repeats span residues Ala133 to Glu172, Asp175 to Gly214, Pro217 to Arg258, Asp260 to Leu299, Ala300 to Ser339, Glu341 to Ala385, Asp396 to Gly435, Val441 to Val481, and Leu486 to Ala525.

Interacts with BZR1, BZR2, BZR3 and GSK2. In terms of processing, auto-ubiquitinated. Post-translationally, phosphorylated by GSK2. Phosphorylation of PUB24 increases its cellular stability.

The protein resides in the cytoplasm. The protein localises to the cytosol. It localises to the nucleus. The catalysed reaction is S-ubiquitinyl-[E2 ubiquitin-conjugating enzyme]-L-cysteine + [acceptor protein]-L-lysine = [E2 ubiquitin-conjugating enzyme]-L-cysteine + N(6)-ubiquitinyl-[acceptor protein]-L-lysine.. The protein operates within protein modification; protein ubiquitination. In terms of biological role, E3 ubiquitin-protein ligase that functions as a negative regulator of brassinosteroid (BR) signaling. Targets BZR1, a positive regulator of BR signaling pathway, and promotes its degradation via the ubiquitin-26S proteasome pathway. In Oryza sativa subsp. japonica (Rice), this protein is U-box domain-containing protein 24.